Reading from the N-terminus, the 371-residue chain is Aminomethyltransferase (371 aa).

The protein belongs to the GcvT family. The glycine cleavage system is composed of four proteins: P, T, L and H.

The enzyme catalyses N(6)-[(R)-S(8)-aminomethyldihydrolipoyl]-L-lysyl-[protein] + (6S)-5,6,7,8-tetrahydrofolate = N(6)-[(R)-dihydrolipoyl]-L-lysyl-[protein] + (6R)-5,10-methylene-5,6,7,8-tetrahydrofolate + NH4(+). Functionally, the glycine cleavage system catalyzes the degradation of glycine. This Pectobacterium atrosepticum (strain SCRI 1043 / ATCC BAA-672) (Erwinia carotovora subsp. atroseptica) protein is Aminomethyltransferase.